Here is a 116-residue protein sequence, read N- to C-terminus: Ferredoxin-like protein in nif region (116 aa).

One can recognise a 4Fe-4S ferredoxin-type domain in the interval 2–29 (AYTITSQCISCKLCSSVCPTGAIKIAEN). Iron-sulfur cluster contacts are provided by C9, C12, C15, and C19.

The sequence is that of Ferredoxin-like protein in nif region (fdxN) from Nostoc sp. (strain PCC 7120 / SAG 25.82 / UTEX 2576).